A 133-amino-acid polypeptide reads, in one-letter code: Profilin-1 (133 aa).

A disulfide bridge links Cys95 with Cys117.

Belongs to the profilin family. As to quaternary structure, dimer and tetramer. Occurs in many kinds of cells as a complex with monomeric actin in a 1:1 ratio.

It is found in the cytoplasm. Its subcellular location is the cytoskeleton. In terms of biological role, binds to actin and affects the structure of the cytoskeleton. At high concentrations, profilin prevents the polymerization of actin, whereas it enhances it at low concentrations. By binding to PIP2, it inhibits the formation of IP3 and DG. Possesses high binding affinity for poly(L-proline). This Artemisia vulgaris (Mugwort) protein is Profilin-1.